Consider the following 1355-residue polypeptide: Ecdysone-induced protein 75B, isoform A (1355 aa).

Disordered regions lie at residues 60 to 91 (QHQP…QQHS), 126 to 228 (RLKN…DSSY), 248 to 268 (ELEQ…EAKP), and 308 to 344 (ATQQ…NSSA). Residues 66-76 (QLHHQHQHQHQ) are compositionally biased toward basic residues. 2 stretches are compositionally biased toward low complexity: residues 77–91 (HQQQ…QQHS) and 143–179 (TLVK…QHQQ). A compositionally biased stretch (acidic residues) spans 200–213 (SGIDEDSPNSDEDC). Composition is skewed to polar residues over residues 218–228 (PAGTSLEDSSY) and 254–264 (TTGGSNAQQQV). Low complexity-rich tracts occupy residues 308-321 (ATQQ…QHQH) and 330-344 (DSNC…NSSA). The segment at residues 384–474 (SQLNYLCQKF…VGMSRDAVRF (91 aa)) is a DNA-binding region (nuclear receptor). The NR C4-type; degenerate zinc-finger motif lies at 387–421 (NYLCQKFDEKLDTALSNSSANTGRNTPAVTANEDA). An NR C4-type zinc finger spans residues 438 to 457 (CTKNQQCSILRINRNRCQYC). The NR LBD domain occupies 508-756 (DQPRLLAAVL…QQMWSMEDGN (249 aa)). Disordered regions lie at residues 780-821 (KSPL…SALA), 927-964 (LDSP…SVDD), 987-1007 (VSVS…KRQI), 1051-1117 (AEAD…SSHS), 1147-1260 (ENST…SNSA), and 1312-1344 (TVTA…NPGL). Composition is skewed to low complexity over residues 797 to 809 (GSPS…GVSL), 948 to 960 (SSGG…SPRS), 987 to 1001 (VSVS…STSS), 1053 to 1098 (ADAS…AQSQ), and 1106 to 1117 (SSPKASMASSHS). Polar residues-rich tracts occupy residues 1149–1162 (STAA…VGNR) and 1174–1196 (AVQN…QRQQ). Low complexity-rich tracts occupy residues 1197–1233 (SVSP…SASS), 1242–1260 (STSN…SNSA), and 1315–1343 (ASNG…PNPG).

The protein belongs to the nuclear hormone receptor family. NR1 subfamily.

It is found in the nucleus. In terms of biological role, implicated in the regulation of ecdysone-triggered gene hierarchies. Probably plays a key role in mediating the regulation of the larval molt by 20-OH-ecdysone. This Drosophila melanogaster (Fruit fly) protein is Ecdysone-induced protein 75B, isoform A (Eip75B).